Reading from the N-terminus, the 351-residue chain is Probable galacturonosyltransferase-like 4 (351 aa).

At 1–8 the chain is on the cytoplasmic side; sequence MASRSLSY. Residues 9-29 form a helical; Signal-anchor for type II membrane protein membrane-spanning segment; sequence TQLLGLLSFILLLVTTTTMAV. Residues 30 to 351 lie on the Lumenal side of the membrane; the sequence is RVGVILHKPS…YRSSRHSLEE (322 aa). N-linked (GlcNAc...) asparagine glycosylation is found at N96 and N203.

Belongs to the glycosyltransferase 8 family.

It localises to the golgi apparatus membrane. Its pathway is glycan metabolism; pectin biosynthesis. In terms of biological role, may be involved in pectin and/or xylans biosynthesis in cell walls. This Arabidopsis thaliana (Mouse-ear cress) protein is Probable galacturonosyltransferase-like 4 (GATL4).